The primary structure comprises 279 residues: Putative Delta(7)-sterol-C5(6)-desaturase 2 (279 aa).

The next 2 helical transmembrane spans lie at 48–68 and 127–147; these read LAGN…IYYL and FLCF…IYWV. In terms of domain architecture, Fatty acid hydroxylase spans 134–263; sequence ALYLVLVEFM…TIWMDWMFGS (130 aa). A Histidine box-1 motif is present at residues 148–152; the sequence is HKELH. The short motif at 162 to 166 is the Histidine box-2 element; sequence HATHH. Residues 194–214 form a helical membrane-spanning segment; the sequence is HVIALFIVPIHLITHLSLLFL. The Histidine box-3 signature appears at 239 to 243; it reads HTIHH.

The protein belongs to the sterol desaturase family. The cofactor is Fe cation.

The protein resides in the endoplasmic reticulum membrane. It carries out the reaction a Delta(7)-sterol + 2 Fe(II)-[cytochrome b5] + O2 + 2 H(+) = a Delta(5),Delta(7)-sterol + 2 Fe(III)-[cytochrome b5] + 2 H2O. The sequence is that of Putative Delta(7)-sterol-C5(6)-desaturase 2 (HDF7) from Arabidopsis thaliana (Mouse-ear cress).